The following is a 930-amino-acid chain: Vacuolar membrane protease (930 aa).

A disordered region spans residues 1–28; sequence MPQEEVHDTSSVSDDNLTNTGGGGSNYY. Residues 1-49 lie on the Cytoplasmic side of the membrane; sequence MPQEEVHDTSSVSDDNLTNTGGGGSNYYNSHNQPNVFVRAIRSIFGYRK. The chain crosses the membrane as a helical span at residues 50–70; that stretch reads TSLTLFVILTIIFTIALSLYD. Residues 71–379 lie on the Vacuolar side of the membrane; that stretch reads NNLDLTIELP…YFFSSPISAL (309 aa). Residue Asn-163 is glycosylated (N-linked (GlcNAc...) asparagine). Zn(2+) is bound by residues His-177 and Asp-189. The active-site Proton acceptor is Glu-222. Positions 223, 248, and 320 each coordinate Zn(2+). The N-linked (GlcNAc...) asparagine glycan is linked to Asn-354. A helical membrane pass occupies residues 380-400; the sequence is VTINSVLIVLFPILSGPLLFI. Over 401–411 the chain is Cytoplasmic; sequence TVRYKKWKIGT. Residues 412–432 form a helical membrane-spanning segment; the sequence is SNFLSLPLAIVLTVAIVMIVV. Topologically, residues 433 to 449 are vacuolar; the sequence is NQGFQIANPFLPSSHPL. A helical transmembrane segment spans residues 450–470; sequence LLVATTTSISLLIYYVFLNGV. The Cytoplasmic portion of the chain corresponds to 471-480; sequence NWVSPSGDQK. Residues 481 to 501 form a helical membrane-spanning segment; the sequence is LITIIEISFIYWLILIYVTHG. At 502–514 the chain is on the vacuolar side; sequence LSQNKIGDDHTGE. A helical membrane pass occupies residues 515–535; sequence FPFTVLFFLEATASLFGLIGW. Over 536 to 598 the chain is Cytoplasmic; that stretch reads TFSRSIKQSS…FGYDWSLQYL (63 aa). The interval 542-570 is disordered; it reads KQSSNDGSDEPLLTGTAERYGSDDTDEDE. The chain crosses the membrane as a helical span at residues 599 to 619; it reads LIVPISSLIIFNSGWLVLDGI. Asn-620 is a glycosylation site (N-linked (GlcNAc...) asparagine). Over 620–631 the chain is Vacuolar; sequence NKSIQESFAAEN. Residues 632-652 traverse the membrane as a helical segment; that stretch reads LIYLLIQLFSQFWILPILPFV. At 653–657 the chain is on the cytoplasmic side; the sequence is YKLNR. Residues 658–678 form a helical membrane-spanning segment; sequence FIVFGLTIFAISGVALISFLD. The Vacuolar portion of the chain corresponds to 679-930; that stretch reads PFNQENPLKL…LVSVSLKIEV (252 aa). Asn-697, Asn-768, Asn-808, and Asn-890 each carry an N-linked (GlcNAc...) asparagine glycan.

This sequence belongs to the peptidase M28 family. Requires Zn(2+) as cofactor.

The protein localises to the vacuole membrane. Functionally, may be involved in vacuolar sorting and osmoregulation. This is Vacuolar membrane protease from Candida dubliniensis (strain CD36 / ATCC MYA-646 / CBS 7987 / NCPF 3949 / NRRL Y-17841) (Yeast).